The following is a 160-amino-acid chain: MRTAAGAVSPDSRPETRRQTRKNEEAAWGPRVCRAEREDNRKCPPSILKRSRPEHHRPEAKPQRTSRRVWFREPPAVTVHYIADKNATATVRVPGRPRPHGGSLLLQLCVCVLLVLALGLYCGRAKPVATALEDLRARLLGLVLHLRHVALTCWRGLLRL.

Positions 1 to 69 (MRTAAGAVSP…AKPQRTSRRV (69 aa)) are disordered. 2 stretches are compositionally biased toward basic and acidic residues: residues 12 to 25 (SRPE…KNEE) and 33 to 42 (CRAEREDNRK). The chain crosses the membrane as a helical span at residues 101–121 (GGSLLLQLCVCVLLVLALGLY).

It localises to the cell membrane. In Homo sapiens (Human), this protein is Nutritionally-regulated adipose and cardiac enriched protein homolog (NRAC).